Reading from the N-terminus, the 196-residue chain is ATP-dependent Clp protease proteolytic subunit (196 aa).

Ser-101 (nucleophile) is an active-site residue. Residue His-126 is part of the active site.

It belongs to the peptidase S14 family. In terms of assembly, component of the chloroplastic Clp protease core complex.

It localises to the plastid. The protein resides in the chloroplast stroma. It catalyses the reaction Hydrolysis of proteins to small peptides in the presence of ATP and magnesium. alpha-casein is the usual test substrate. In the absence of ATP, only oligopeptides shorter than five residues are hydrolyzed (such as succinyl-Leu-Tyr-|-NHMec, and Leu-Tyr-Leu-|-Tyr-Trp, in which cleavage of the -Tyr-|-Leu- and -Tyr-|-Trp bonds also occurs).. Functionally, cleaves peptides in various proteins in a process that requires ATP hydrolysis. Has a chymotrypsin-like activity. Plays a major role in the degradation of misfolded proteins. In Morus indica (Mulberry), this protein is ATP-dependent Clp protease proteolytic subunit.